A 1231-amino-acid polypeptide reads, in one-letter code: ATP-dependent RNA helicase DHX30 (1231 aa).

A disordered region spans residues 39–65 (PDGLEGARQEDEEEQPPPPGAEEQSTA). DRBM domains follow at residues 80-148 (PKNL…CQLF) and 292-359 (PKNL…CQKL). One can recognise a Helicase ATP-binding domain in the interval 488-656 (LSAIEQNPVV…FGGCPVVKVP (169 aa)). 501-508 (GDTGCGKT) lines the ATP pocket. Residues 603–606 (DEVH) carry the DEAH box motif. Positions 697-870 (LITDLVLQID…NLVVQAKIHM (174 aa)) constitute a Helicase C-terminal domain.

Belongs to the DEAD box helicase family. DEAH subfamily.

The protein resides in the cytoplasm. It localises to the mitochondrion. Its subcellular location is the mitochondrion matrix. It is found in the mitochondrion nucleoid. It catalyses the reaction ATP + H2O = ADP + phosphate + H(+). RNA-dependent helicase. Plays an important role in the assembly of the mitochondrial large ribosomal subunit. Required for optimal function of the zinc-finger antiviral protein ZC3HAV1. Associates with mitochondrial DNA. Involved in nervous system development and differentiation through its involvement in the up-regulation of a number of genes which are required for neurogenesis, including GSC, NCAM1, neurogenin, and NEUROD. The sequence is that of ATP-dependent RNA helicase DHX30 (DHX30) from Gallus gallus (Chicken).